Here is a 273-residue protein sequence, read N- to C-terminus: Peptidoglycan-N-acetylglucosamine deacetylase BC_1974 (273 aa).

Residues 10–30 (IVVVLIAIAAVAIGYYMFQSI) traverse the membrane as a helical segment. Residues 69-255 (KVAYLTFDDG…GLKEKGYEFE (187 aa)) form the NodB homology domain. The Proton acceptor role is filled by aspartate 76. Zn(2+)-binding residues include aspartate 77, histidine 126, and histidine 130. Residue histidine 230 is the Proton donor of the active site.

Belongs to the polysaccharide deacetylase family. The cofactor is Zn(2+). Co(2+) is required as a cofactor. It depends on Ni(2+) as a cofactor.

It is found in the cell membrane. It carries out the reaction peptidoglycan-N-acetyl-D-glucosamine + H2O = peptidoglycan-D-glucosamine + acetate.. Inhibited by the hydroxamate N-hydroxy-4-(naphthalene-1-yl)benzamide (NHNB). In terms of biological role, catalyzes the deacetylation of N-acetylglucosamine (GlcNAc) residues in peptidoglycan. The chain is Peptidoglycan-N-acetylglucosamine deacetylase BC_1974 from Bacillus cereus (strain ATCC 14579 / DSM 31 / CCUG 7414 / JCM 2152 / NBRC 15305 / NCIMB 9373 / NCTC 2599 / NRRL B-3711).